The chain runs to 300 residues: NAD kinase (300 aa).

Asp75 (proton acceptor) is an active-site residue. Residues 75 to 76, 149 to 150, Arg177, Asp179, 190 to 195, Ala214, and Gln248 contribute to the NAD(+) site; these read DG, ND, and TAYALS.

This sequence belongs to the NAD kinase family. A divalent metal cation serves as cofactor.

The protein resides in the cytoplasm. The catalysed reaction is NAD(+) + ATP = ADP + NADP(+) + H(+). Functionally, involved in the regulation of the intracellular balance of NAD and NADP, and is a key enzyme in the biosynthesis of NADP. Catalyzes specifically the phosphorylation on 2'-hydroxyl of the adenosine moiety of NAD to yield NADP. This is NAD kinase from Burkholderia mallei (strain SAVP1).